The primary structure comprises 204 residues: Glycerol-3-phosphate acyltransferase (204 aa).

Transmembrane regions (helical) follow at residues 12 to 32 (LVMGYLLGSLPSGYLAAHWLA), 85 to 105 (WQVAAGLAALAGHIWPVWLGW), 117 to 137 (MLLGISWPVGLACFGIFLTVL), 142 to 162 (IVSLSSIIAALSLPLLMILRF), and 163 to 183 (QGNSPPAYLAVAFAAMAMVVW).

Belongs to the PlsY family. As to quaternary structure, probably interacts with PlsX.

The protein resides in the cell inner membrane. The catalysed reaction is an acyl phosphate + sn-glycerol 3-phosphate = a 1-acyl-sn-glycero-3-phosphate + phosphate. It functions in the pathway lipid metabolism; phospholipid metabolism. Its function is as follows. Catalyzes the transfer of an acyl group from acyl-phosphate (acyl-PO(4)) to glycerol-3-phosphate (G3P) to form lysophosphatidic acid (LPA). This enzyme utilizes acyl-phosphate as fatty acyl donor, but not acyl-CoA or acyl-ACP. This is Glycerol-3-phosphate acyltransferase from Prochlorococcus marinus (strain MIT 9313).